We begin with the raw amino-acid sequence, 316 residues long: DNA-directed RNA polymerase subunit alpha (316 aa).

The segment at 1 to 230 is alpha N-terminal domain (alpha-NTD); sequence MIEFEKPNIH…EHLAMFVDLT (230 aa). Positions 247–316 are alpha C-terminal domain (alpha-CTD); it reads KEKMLEMTIE…DLGLSLRKED (70 aa).

Belongs to the RNA polymerase alpha chain family. As to quaternary structure, homodimer. The RNAP catalytic core consists of 2 alpha, 1 beta, 1 beta' and 1 omega subunit. When a sigma factor is associated with the core the holoenzyme is formed, which can initiate transcription.

The enzyme catalyses RNA(n) + a ribonucleoside 5'-triphosphate = RNA(n+1) + diphosphate. Its function is as follows. DNA-dependent RNA polymerase catalyzes the transcription of DNA into RNA using the four ribonucleoside triphosphates as substrates. This chain is DNA-directed RNA polymerase subunit alpha, found in Levilactobacillus brevis (strain ATCC 367 / BCRC 12310 / CIP 105137 / JCM 1170 / LMG 11437 / NCIMB 947 / NCTC 947) (Lactobacillus brevis).